We begin with the raw amino-acid sequence, 319 residues long: 1-aminocyclopropane-1-carboxylate oxidase (319 aa).

The Fe2OG dioxygenase domain maps to 152-253; it reads GPNFGSKVSN…RMSLASFYNP (102 aa). Fe cation is bound by residues H177, D179, and H234.

It belongs to the iron/ascorbate-dependent oxidoreductase family. Fe cation serves as cofactor.

The catalysed reaction is 1-aminocyclopropane-1-carboxylate + L-ascorbate + O2 = ethene + L-dehydroascorbate + hydrogen cyanide + CO2 + 2 H2O. It participates in alkene biosynthesis; ethylene biosynthesis via S-adenosyl-L-methionine; ethylene from S-adenosyl-L-methionine: step 2/2. In Nicotiana tabacum (Common tobacco), this protein is 1-aminocyclopropane-1-carboxylate oxidase (ACO).